Consider the following 280-residue polypeptide: Ribosomal RNA small subunit methyltransferase A (280 aa).

S-adenosyl-L-methionine is bound by residues His-15, Leu-17, Gly-42, Glu-64, Asp-89, and Asn-109.

This sequence belongs to the class I-like SAM-binding methyltransferase superfamily. rRNA adenine N(6)-methyltransferase family. RsmA subfamily.

It is found in the cytoplasm. The enzyme catalyses adenosine(1518)/adenosine(1519) in 16S rRNA + 4 S-adenosyl-L-methionine = N(6)-dimethyladenosine(1518)/N(6)-dimethyladenosine(1519) in 16S rRNA + 4 S-adenosyl-L-homocysteine + 4 H(+). In terms of biological role, specifically dimethylates two adjacent adenosines (A1518 and A1519) in the loop of a conserved hairpin near the 3'-end of 16S rRNA in the 30S particle. May play a critical role in biogenesis of 30S subunits. The protein is Ribosomal RNA small subunit methyltransferase A of Prochlorococcus marinus (strain MIT 9313).